We begin with the raw amino-acid sequence, 92 residues long: Actobindin-A (92 aa).

Disordered regions lie at residues 1–33 (MSAPNPLLAEINKGADLKHTETQDKSAPKIGSD) and 54–92 (LKHAETDDKSAPKINENTTIKPNNHSALLGEIKAKAADS). 2 consecutive WH2 domains span residues 3 to 20 (APNPLLAEINKGADLKHT) and 40 to 57 (DHASLLSEVEQGAKLKHA). Basic and acidic residues-rich tracts occupy residues 13-33 (KGADLKHTETQDKSAPKIGSD) and 54-64 (LKHAETDDKSA). The span at 68-79 (NENTTIKPNNHS) shows a compositional bias: polar residues.

Monomer.

Is able to bind two actin monomers at high concentrations of G-actin. Inhibits actin polymerization by sequestering G-actin and stabilizing actin dimers. This is Actobindin-A (abnA) from Dictyostelium discoideum (Social amoeba).